A 1141-amino-acid polypeptide reads, in one-letter code: Eukaryotic translation initiation factor 3 subunit A (1141 aa).

Residues 319-501 (LQRMAAHVLL…NSIYFGTDLT (183 aa)) form the PCI domain. Basic and acidic residues-rich tracts occupy residues 588-623 (QNNAREEEEARRQEEESRKAKLAEQKRLEQEQEERE) and 829-899 (AAEE…RGGD). Disordered regions lie at residues 588-631 (QNNA…QNEI) and 829-1141 (AAEE…VKRR). Ser908 bears the Phosphoserine mark. Basic and acidic residues-rich tracts occupy residues 920-976 (ERND…EPDT), 990-1051 (SRDD…EPQR), 1059-1087 (DAPRHADRENRRPAGERRDRDVRETRGDQ), and 1110-1131 (TREEKPAAKRDQAQEKENKAGD).

This sequence belongs to the eIF-3 subunit A family. In terms of assembly, component of the eukaryotic translation initiation factor 3 (eIF-3) complex. The eIF-3 complex interacts with pix.

Its subcellular location is the cytoplasm. RNA-binding component of the eukaryotic translation initiation factor 3 (eIF-3) complex, which is involved in protein synthesis of a specialized repertoire of mRNAs and, together with other initiation factors, stimulates binding of mRNA and methionyl-tRNAi to the 40S ribosome. The eIF-3 complex specifically targets and initiates translation of a subset of mRNAs involved in cell proliferation. This is Eukaryotic translation initiation factor 3 subunit A from Drosophila simulans (Fruit fly).